We begin with the raw amino-acid sequence, 525 residues long: Beta-galactoside alpha-2,6-sialyltransferase 2 (525 aa).

The Cytoplasmic segment spans residues 1–11 (MKPHLKQWRQR). Residues 12 to 32 (MLFAIFVWGLLFLAIFIYFTN) form a helical; Signal-anchor for type II membrane protein membrane-spanning segment. Residues 33–525 (SNPAAPMPSS…PVTRPNNTNT (493 aa)) are Lumenal-facing. 2 disordered regions span residues 85 to 107 (SASPFNSWPGDPQKGDQAQDGFD) and 145 to 183 (RQGALGLPSPGESSWQSGPGQPKQEKLRHPRRGSLPEEA). 3 disulfide bridges follow: cysteine 249-cysteine 515, cysteine 292-cysteine 444, and cysteine 462-cysteine 473. Residues asparagine 303 and asparagine 333 are each glycosylated (N-linked (GlcNAc...) asparagine). Residue asparagine 521 is glycosylated (N-linked (GlcNAc...) asparagine).

This sequence belongs to the glycosyltransferase 29 family.

It localises to the golgi apparatus. The protein resides in the golgi stack membrane. The catalysed reaction is a beta-D-galactoside + CMP-N-acetyl-beta-neuraminate = an N-acetyl-alpha-neuraminyl-(2-&gt;6)-beta-D-galactosyl derivative + CMP + H(+). Functionally, transfers sialic acid from the donor of substrate CMP-sialic acid to galactose containing acceptor substrates. Has alpha-2,6-sialyltransferase activity toward oligosaccharides that have the Gal-beta-1,4-GlcNAc sequence at the non-reducing end of their carbohydrate groups, but it has weak or no activities toward glycoproteins and glycolipids. This Rattus norvegicus (Rat) protein is Beta-galactoside alpha-2,6-sialyltransferase 2 (St6gal2).